Here is a 150-residue protein sequence, read N- to C-terminus: Large ribosomal subunit protein bL9 (150 aa).

It belongs to the bacterial ribosomal protein bL9 family.

In terms of biological role, binds to the 23S rRNA. This Photorhabdus laumondii subsp. laumondii (strain DSM 15139 / CIP 105565 / TT01) (Photorhabdus luminescens subsp. laumondii) protein is Large ribosomal subunit protein bL9.